The sequence spans 252 residues: Enolase-phosphatase E1 (252 aa).

Residues Asp-18 and Glu-20 each coordinate Mg(2+). Substrate contacts are provided by residues 149–150 and Lys-184; that span reads SS. Asp-209 provides a ligand contact to Mg(2+).

The protein belongs to the HAD-like hydrolase superfamily. MasA/MtnC family. Monomer. Mg(2+) serves as cofactor.

It is found in the cytoplasm. The protein resides in the nucleus. The catalysed reaction is 5-methylsulfanyl-2,3-dioxopentyl phosphate + H2O = 1,2-dihydroxy-5-(methylsulfanyl)pent-1-en-3-one + phosphate. Its pathway is amino-acid biosynthesis; L-methionine biosynthesis via salvage pathway; L-methionine from S-methyl-5-thio-alpha-D-ribose 1-phosphate: step 3/6. It participates in amino-acid biosynthesis; L-methionine biosynthesis via salvage pathway; L-methionine from S-methyl-5-thio-alpha-D-ribose 1-phosphate: step 4/6. Bifunctional enzyme that catalyzes the enolization of 2,3-diketo-5-methylthiopentyl-1-phosphate (DK-MTP-1-P) into the intermediate 2-hydroxy-3-keto-5-methylthiopentenyl-1-phosphate (HK-MTPenyl-1-P), which is then dephosphorylated to form the acireductone 1,2-dihydroxy-3-keto-5-methylthiopentene (DHK-MTPene). This Naegleria gruberi (Amoeba) protein is Enolase-phosphatase E1.